Here is a 533-residue protein sequence, read N- to C-terminus: D-3-phosphoglycerate dehydrogenase (533 aa).

A2 is subject to N-acetylalanine. Position 14 is a phosphoserine (S14). K21 carries the N6-acetyllysine; alternate modification. K21 is covalently cross-linked (Glycyl lysine isopeptide (Lys-Gly) (interchain with G-Cter in SUMO1); alternate). K21 is covalently cross-linked (Glycyl lysine isopeptide (Lys-Gly) (interchain with G-Cter in SUMO2); alternate). K58 is modified (N6-acetyllysine). Residues T78, 155–156, D175, T207, 234–236, and D260 each bind NAD(+); these read RI and CAR. T78 bears the Phosphothreonine mark. R236 is a catalytic residue. Residue E265 is part of the active site. The active-site Proton donor is the H283. 283–286 contacts NAD(+); it reads HLGA.

The protein belongs to the D-isomer specific 2-hydroxyacid dehydrogenase family. In terms of assembly, homotetramer.

The catalysed reaction is (2R)-3-phosphoglycerate + NAD(+) = 3-phosphooxypyruvate + NADH + H(+). The enzyme catalyses (R)-2-hydroxyglutarate + NAD(+) = 2-oxoglutarate + NADH + H(+). It carries out the reaction (S)-malate + NAD(+) = oxaloacetate + NADH + H(+). Its pathway is amino-acid biosynthesis; L-serine biosynthesis; L-serine from 3-phospho-D-glycerate: step 1/3. Catalyzes the reversible oxidation of 3-phospho-D-glycerate to 3-phosphonooxypyruvate, the first step of the phosphorylated L-serine biosynthesis pathway. Also catalyzes the reversible oxidation of 2-hydroxyglutarate to 2-oxoglutarate and the reversible oxidation of (S)-malate to oxaloacetate. This chain is D-3-phosphoglycerate dehydrogenase (PHGDH), found in Homo sapiens (Human).